We begin with the raw amino-acid sequence, 366 residues long: Chorismate synthase (366 aa).

Arginine 48 and arginine 54 together coordinate NADP(+). FMN-binding positions include 125 to 127 (RSS), 237 to 238 (NA), glycine 277, 292 to 296 (KPTSS), and arginine 318.

It belongs to the chorismate synthase family. In terms of assembly, homotetramer. FMNH2 is required as a cofactor.

It carries out the reaction 5-O-(1-carboxyvinyl)-3-phosphoshikimate = chorismate + phosphate. The protein operates within metabolic intermediate biosynthesis; chorismate biosynthesis; chorismate from D-erythrose 4-phosphate and phosphoenolpyruvate: step 7/7. Its function is as follows. Catalyzes the anti-1,4-elimination of the C-3 phosphate and the C-6 proR hydrogen from 5-enolpyruvylshikimate-3-phosphate (EPSP) to yield chorismate, which is the branch point compound that serves as the starting substrate for the three terminal pathways of aromatic amino acid biosynthesis. This reaction introduces a second double bond into the aromatic ring system. The sequence is that of Chorismate synthase from Acidovorax ebreus (strain TPSY) (Diaphorobacter sp. (strain TPSY)).